The following is a 1056-amino-acid chain: Contactin-5 (1056 aa).

A compositionally biased stretch (low complexity) spans 1–14 (MKADSSSSSSMSSR). Residues 1-33 (MKADSSSSSSMSSRMRLRNSHGVGSSSQDWSPF) form a disordered region. Over residues 22–31 (GVGSSSQDWS) the composition is skewed to polar residues. Ig-like C2-type domains are found at residues 57–142 (PVFI…IVLS), 154–240 (PFSG…RVLS), 258–343 (PKIE…GHLQ), 348–432 (PQWI…AELK), 438–519 (PMFN…AELT), and 527–622 (PMRV…AELL). Intrachain disulfides connect Cys81/Cys131, Cys175/Cys227, and Cys280/Cys327. 2 N-linked (GlcNAc...) asparagine glycosylation sites follow: Asn96 and Asn119. Residue Asn355 is glycosylated (N-linked (GlcNAc...) asparagine). Disulfide bonds link Cys369-Cys416, Cys459-Cys507, and Cys549-Cys606. Asn489 and Asn496 each carry an N-linked (GlcNAc...) asparagine glycan. Fibronectin type-III domains are found at residues 629–727 (PPGV…TKEA), 732–829 (APAN…SAEG), 834–928 (PPSE…TKKN), and 933–1023 (PPGN…TSSG). The tract at residues 711–736 (GTGDPSPPSRAVRTKEAVPSVAPANV) is disordered. 4 N-linked (GlcNAc...) asparagine glycosylation sites follow: Asn772, Asn887, Asn945, and Asn958. A lipid anchor (GPI-anchor amidated asparagine) is attached at Asn1035. Residues 1036–1056 (SPPGLAWTALFLSLMVPSFPL) constitute a propeptide, removed in mature form.

This sequence belongs to the immunoglobulin superfamily. Contactin family.

Its subcellular location is the cell membrane. Its function is as follows. Contactins mediate cell surface interactions during nervous system development. This Danio rerio (Zebrafish) protein is Contactin-5 (cntn5).